Reading from the N-terminus, the 370-residue chain is Anthranilate phosphoribosyltransferase (370 aa).

Residues Gly-82, 85-86, Thr-90, 92-95, 110-118, and Ser-122 contribute to the 5-phospho-alpha-D-ribose 1-diphosphate site; these read GD, NVST, and KHGNRAATS. Gly-82 contributes to the anthranilate binding site. Ser-94 contacts Mg(2+). Asn-113 is a binding site for anthranilate. Arg-168 lines the anthranilate pocket. Mg(2+) is bound by residues Asp-226 and Glu-227.

This sequence belongs to the anthranilate phosphoribosyltransferase family. As to quaternary structure, homodimer. The cofactor is Mg(2+).

The catalysed reaction is N-(5-phospho-beta-D-ribosyl)anthranilate + diphosphate = 5-phospho-alpha-D-ribose 1-diphosphate + anthranilate. It participates in amino-acid biosynthesis; L-tryptophan biosynthesis; L-tryptophan from chorismate: step 2/5. Functionally, catalyzes the transfer of the phosphoribosyl group of 5-phosphorylribose-1-pyrophosphate (PRPP) to anthranilate to yield N-(5'-phosphoribosyl)-anthranilate (PRA). This is Anthranilate phosphoribosyltransferase from Methanosarcina mazei (strain ATCC BAA-159 / DSM 3647 / Goe1 / Go1 / JCM 11833 / OCM 88) (Methanosarcina frisia).